Here is a 543-residue protein sequence, read N- to C-terminus: Zinc finger protein egl-43 (543 aa).

Residues 2–62 (SIDTDFLTSV…NLIKEADDGE (61 aa)) form a positive regulatory (PR) domain region. 2 consecutive C2H2-type zinc fingers follow at residues 159–181 (HKCG…SHIH) and 187–209 (FRCH…RRVH). Residues 213-233 (WTCPTCQSQMPSQAALTKHRP) form a C2H2-type 3; atypical zinc finger. Residues 299–380 (PDAECSSGHA…TSTKKRPTSH (82 aa)) form a disordered region. The span at 306 to 317 (GHASESSPTTTE) shows a compositional bias: polar residues. Residues 335 to 348 (TTSKSDDGEDRDSI) show a composition bias toward basic and acidic residues. 2 consecutive C2H2-type zinc fingers follow at residues 444 to 466 (YTCK…LRTH) and 472 to 495 (YKCQ…RNIH). A disordered region spans residues 496–543 (NKPNTSLTPHNHHRQRSLHNSTSTSTTTTTVHHPLLHLPGTSVPVPKV). Residues 513–533 (LHNSTSTSTTTTTVHHPLLHL) are compositionally biased toward low complexity.

It localises to the nucleus. Its function is as follows. Probable transcription factor, required for migration of the hermaphrodite-specific motor neurons (HSNs) from the tail to the gonad primordium during HSN cell differentiation. Required for phasmid neuron development. Required to specify the pi-cell fate of ventral uterine precursor cell (VU) cells. Probable transcription factor, involved in lin-12 (Notch)-dependent anchor cell (AC) and ventral uterine (VU) precursor cell fate specification and in AC invasion. Prevents AC proliferation after AC cell specification by repressing lin-12 expression. May form a positive feedback loop, together with the transcription factor fos-1, that maintains mutual high levels of expression and so activates AC invasion. In terms of biological role, dispensable for anchor cell (AC) invasion and for preventing AC proliferation. The protein is Zinc finger protein egl-43 of Caenorhabditis elegans.